The primary structure comprises 1080 residues: Putative bifunctional amine oxidase DDB_G0291301 (1080 aa).

The tract at residues 1-450 (MREFLKDDYD…TIAKSTVPTN (450 aa)) is putative sarcosine oxidase. 10 to 40 (DVIVCGGGPVGLATAYRCAKAGKKVLCLEKS) contacts FAD. The segment at 445-464 (STVPTNQSSNPDGASSTAPT) is disordered. Residues 450 to 1080 (NQSSNPDGAS…NTAASIGGLK (631 aa)) form a putative L-amino-acid oxidase region. The helical transmembrane segment at 508-528 (VGIIGAGMAGLYAAMILQDLG) threads the bilayer. Residues Glu535, Arg544, and 563 to 564 (GA) each bind FAD. Tyr886 serves as a coordination point for substrate. Residues Glu978 and 987–990 (VIGS) each bind FAD.

This sequence in the N-terminal section; belongs to the MSOX/MTOX family. In the C-terminal section; belongs to the flavin monoamine oxidase family. Requires FAD as cofactor.

It is found in the membrane. It carries out the reaction sarcosine + O2 + H2O = formaldehyde + glycine + H2O2. The catalysed reaction is L-pipecolate + O2 = L-1-piperideine-6-carboxylate + H2O2 + H(+). It catalyses the reaction an L-alpha-amino acid + O2 + H2O = a 2-oxocarboxylate + H2O2 + NH4(+). Functionally, catalyzes an oxidative deamination of predominantly hydrophobic and aromatic L-amino acids. Metabolizes sarcosine, L-pipecolic acid and L-proline. The chain is Putative bifunctional amine oxidase DDB_G0291301 from Dictyostelium discoideum (Social amoeba).